Reading from the N-terminus, the 348-residue chain is Flagellar P-ring protein (348 aa).

The N-terminal stretch at 1–16 (MRVLTIFLLFMTSIFA) is a signal peptide.

This sequence belongs to the FlgI family. In terms of assembly, the basal body constitutes a major portion of the flagellar organelle and consists of four rings (L,P,S, and M) mounted on a central rod.

Its subcellular location is the periplasm. The protein localises to the bacterial flagellum basal body. Its function is as follows. Assembles around the rod to form the L-ring and probably protects the motor/basal body from shearing forces during rotation. The protein is Flagellar P-ring protein of Campylobacter jejuni subsp. jejuni serotype O:23/36 (strain 81-176).